The sequence spans 383 residues: BRISC and BRCA1-A complex member 2 (383 aa).

An N-acetylmethionine modification is found at Met-1. Ser-2 is subject to Phosphoserine. UEV-like regions lie at residues 30–147 (DATN…TLLE) and 275–364 (IAAF…RAKA).

The protein belongs to the BABAM2 family. As to quaternary structure, component of the ARISC complex, at least composed of UIMC1/RAP80, ABRAXAS1, BRCC3/BRCC36, BABAM2 and BABAM1/NBA1. Component of the BRCA1-A complex, at least composed of BRCA1, BARD1, UIMC1/RAP80, ABRAXAS1, BRCC3/BRCC36, BABAM2 and BABAM1/NBA1. In the BRCA1-A complex, interacts directly with ABRAXAS1, BRCC3/BRCC36 and BABAM1/NBA1. Binds polyubiquitin. Component of the BRISC complex, at least composed of ABRAXAS2, BRCC3/BRCC36, BABAM2 and BABAM1/NBA1. Identified in a complex with SHMT2 and the other subunits of the BRISC complex. Component of the BRCA1/BRCA2 containing complex (BRCC), which also contains BRCA1, BRCA2, BARD1, BRCC3/BRCC36 and RAD51. BRCC is a ubiquitin E3 ligase complex that enhances cellular survival following DNA damage. May interact with FAS and TNFRSF1A.

The protein localises to the cytoplasm. The protein resides in the nucleus. Functionally, component of the BRCA1-A complex, a complex that specifically recognizes 'Lys-63'-linked ubiquitinated histones H2A and H2AX at DNA lesions sites, leading to target the BRCA1-BARD1 heterodimer to sites of DNA damage at double-strand breaks (DSBs). The BRCA1-A complex also possesses deubiquitinase activity that specifically removes 'Lys-63'-linked ubiquitin on histones H2A and H2AX. In the BRCA1-A complex, it acts as an adapter that bridges the interaction between BABAM1/NBA1 and the rest of the complex, thereby being required for the complex integrity and modulating the E3 ubiquitin ligase activity of the BRCA1-BARD1 heterodimer. Component of the BRISC complex, a multiprotein complex that specifically cleaves 'Lys-63'-linked ubiquitin in various substrates. Within the BRISC complex, acts as an adapter that bridges the interaction between BABAM1/NBA1 and the rest of the complex, thereby being required for the complex integrity. The BRISC complex is required for normal mitotic spindle assembly and microtubule attachment to kinetochores via its role in deubiquitinating NUMA1. The BRISC complex plays a role in interferon signaling via its role in the deubiquitination of the interferon receptor IFNAR1; deubiquitination increases IFNAR1 activity by enhancing its stability and cell surface expression. Down-regulates the response to bacterial lipopolysaccharide (LPS) via its role in IFNAR1 deubiquitination. May play a role in homeostasis or cellular differentiation in cells of neural, epithelial and germline origins. May also act as a death receptor-associated anti-apoptotic protein, which inhibits the mitochondrial apoptotic pathway. May regulate TNF-alpha signaling through its interactions with TNFRSF1A; however these effects may be indirect. In Rattus norvegicus (Rat), this protein is BRISC and BRCA1-A complex member 2.